The sequence spans 1642 residues: Cobra venom factor (1642 aa).

Positions 1-22 are cleaved as a signal peptide; it reads MERMALYLVAALLIGFPGSSHG. Asn-153, Asn-158, and Asn-209 each carry an N-linked (GlcNAc...) asparagine glycan. Positions 516, 539, 540, and 542 each coordinate Mg(2+). Intrachain disulfides connect Cys-544-Cys-801, Cys-609-Cys-644, Cys-677-Cys-704, Cys-678-Cys-711, Cys-691-Cys-712, Cys-857-Cys-1492, Cys-1340-Cys-1468, Cys-1368-Cys-1437, Cys-1485-Cys-1490, Cys-1497-Cys-1569, Cys-1516-Cys-1640, and Cys-1616-Cys-1625. A propeptide spanning residues 650–732 is cleaved from the precursor; that stretch reads RRRRSSVLLL…QRESELFLAR (83 aa). The tract at residues 654–732 is C3a-like domain; it reads SSVLLLDSNA…QRESELFLAR (79 aa). The Anaphylatoxin-like domain occupies 677-712; sequence CCEDVMHENPMGYTCEKRAKYIQEGDACKAAFLECC. The segment at 736 to 747 is factor B binding site; sequence EDGFIADSDIIS. Positions 985-1263 are excised as a propeptide; the sequence is HLIITPSGCG…VMAFQALAEY (279 aa). The interval 985–1263 is C3d-like domain; that stretch reads HLIITPSGCG…VMAFQALAEY (279 aa). Residues 993–996 constitute a cross-link (isoglutamyl cysteine thioester (Cys-Gln)); it reads CGEQ. Positions 1190–1253 are factor H binding site; sequence VLMAASTGRD…GETYGQTQAT (64 aa). N-linked (GlcNAc...) asparagine glycosylation is present at Asn-1346. Residues 1497 to 1640 enclose the NTR domain; it reads CSSLNHQERI…FSYTLTEFGC (144 aa).

Belongs to the venom complement C3 homolog family. Heterotrimer of alpha, beta and gamma chains; disulfide-linked. Is active with factor B in the presence of factor D. First processed by the removal of 4 Arg residues by furin-type protease, forming two chains, alpha and gamma/beta precursor, linked by a disulfide bond. Probably, the cobrin cleaves the C3a-like domain and then the C3d-like domain, generating the mature cobra venom factor (CVF). This mature CVF is composed of three chains: alpha, gamma and beta. Post-translationally, contains 3 N-linked oligosaccharide chains, two in the alpha-chain and one in the beta-chain. Glycosylation is not required for the biological activity. However, it contributes to the immunogenicity of CVF. The carbohydrate content is 7.4. The major oligosaccharide is a symmetric fucosylated biantennary complex-type chain with an unusual alpha-galactosylated Le(x) structure at its non-reducing end. As to expression, expressed by the venom gland.

Its subcellular location is the secreted. Its function is as follows. Complement-activating protein in cobra venom. It is a structural and functional analog of complement component C3b, the activated form of C3. It binds factor B (CFB), which is subsequently cleaved by factor D (CFD) to form the bimolecular complex CVF/Bb. CVF/Bb is a C3/C5 convertase that cleaves both complement components C3 and C5. Structurally, it resembles the C3b degradation product C3c, which is not able to form a C3/C5 convertase. Unlike C3b/Bb, CVF/Bb is a stable complex and completely resistant to the actions of complement regulatory factors H (CFH) and I (CFI). Therefore, CVF continuously activates complement resulting in the depletion of complement activity. This is Cobra venom factor from Naja kaouthia (Monocled cobra).